The chain runs to 35 residues: Photosystem II reaction center protein M (35 aa).

The helical transmembrane segment at 5-25 (ILAFIATALFILVPTAFLLII) threads the bilayer.

It belongs to the PsbM family. In terms of assembly, PSII is composed of 1 copy each of membrane proteins PsbA, PsbB, PsbC, PsbD, PsbE, PsbF, PsbH, PsbI, PsbJ, PsbK, PsbL, PsbM, PsbT, PsbX, PsbY, PsbZ, Psb30/Ycf12, at least 3 peripheral proteins of the oxygen-evolving complex and a large number of cofactors. It forms dimeric complexes.

It is found in the plastid. Its subcellular location is the chloroplast thylakoid membrane. Functionally, one of the components of the core complex of photosystem II (PSII). PSII is a light-driven water:plastoquinone oxidoreductase that uses light energy to abstract electrons from H(2)O, generating O(2) and a proton gradient subsequently used for ATP formation. It consists of a core antenna complex that captures photons, and an electron transfer chain that converts photonic excitation into a charge separation. This subunit is found at the monomer-monomer interface. The sequence is that of Photosystem II reaction center protein M from Panax quinquefolius (American ginseng).